A 99-amino-acid chain; its full sequence is Cystatin (99 aa).

Residues 3–99 (GGLSPRSVSD…EEKLCGFQVW (97 aa)) form the Cystatin domain. Residues 47–51 (QSVAG) carry the Secondary area of contact motif. The cysteines at positions 65 and 81 are disulfide-linked.

Belongs to the cystatin family. As to expression, expressed by the venom gland.

The protein localises to the secreted. In terms of biological role, inhibits various C1 cysteine proteases including cathepsin L (Ki is 0.1 nM), papain (Ki is 0.19 nM), cathepsin S (Ki is 1.2 nM), and cathepsin B (Ki is 2.5 nM). This protein has no toxic activity and its function in the venom is unknown. It may play a role as housekeeping or regulatory protein. In Naja atra (Chinese cobra), this protein is Cystatin.